The following is a 101-amino-acid chain: NADH-quinone oxidoreductase subunit K (101 aa).

The next 3 helical transmembrane spans lie at 2–22 (ISLNHYLIVAALMFVIGLVGV), 29–49 (IMLFFSTEILLNAANVALVAI), and 63–83 (MFIIAIAASEMAVGLGLLILW).

It belongs to the complex I subunit 4L family. As to quaternary structure, NDH-1 is composed of 14 different subunits. Subunits NuoA, H, J, K, L, M, N constitute the membrane sector of the complex.

The protein localises to the cell inner membrane. The catalysed reaction is a quinone + NADH + 5 H(+)(in) = a quinol + NAD(+) + 4 H(+)(out). In terms of biological role, NDH-1 shuttles electrons from NADH, via FMN and iron-sulfur (Fe-S) centers, to quinones in the respiratory chain. The immediate electron acceptor for the enzyme in this species is believed to be ubiquinone. Couples the redox reaction to proton translocation (for every two electrons transferred, four hydrogen ions are translocated across the cytoplasmic membrane), and thus conserves the redox energy in a proton gradient. The protein is NADH-quinone oxidoreductase subunit K of Campylobacter hominis (strain ATCC BAA-381 / DSM 21671 / CCUG 45161 / LMG 19568 / NCTC 13146 / CH001A).